The following is a 404-amino-acid chain: Argininosuccinate synthase (404 aa).

ATP-binding positions include 11–19 and alanine 40; that span reads AYSGGLDTS. L-citrulline is bound by residues tyrosine 92 and serine 97. Glycine 122 contacts ATP. Residues threonine 124, asparagine 128, and aspartate 129 each contribute to the L-aspartate site. An L-citrulline-binding site is contributed by asparagine 128. Residues arginine 132, serine 181, serine 190, glutamate 266, and tyrosine 278 each contribute to the L-citrulline site.

Belongs to the argininosuccinate synthase family. Type 1 subfamily. Homotetramer.

The protein resides in the cytoplasm. It catalyses the reaction L-citrulline + L-aspartate + ATP = 2-(N(omega)-L-arginino)succinate + AMP + diphosphate + H(+). The protein operates within amino-acid biosynthesis; L-arginine biosynthesis; L-arginine from L-ornithine and carbamoyl phosphate: step 2/3. This chain is Argininosuccinate synthase, found in Moritella abyssi.